The sequence spans 89 residues: Small ribosomal subunit protein uS15 (89 aa).

It belongs to the universal ribosomal protein uS15 family. In terms of assembly, part of the 30S ribosomal subunit. Forms a bridge to the 50S subunit in the 70S ribosome, contacting the 23S rRNA.

One of the primary rRNA binding proteins, it binds directly to 16S rRNA where it helps nucleate assembly of the platform of the 30S subunit by binding and bridging several RNA helices of the 16S rRNA. Its function is as follows. Forms an intersubunit bridge (bridge B4) with the 23S rRNA of the 50S subunit in the ribosome. The sequence is that of Small ribosomal subunit protein uS15 from Rhodospirillum centenum (strain ATCC 51521 / SW).